Here is a 92-residue protein sequence, read N- to C-terminus: NELL2-interacting cell ontogeny regulator 1 (92 aa).

The signal sequence occupies residues 1 to 30 (MALPSAWSVMRVVIPFISVLGLLGVRLVGA).

Belongs to the NICOL family.

Its subcellular location is the secreted. It localises to the cytoplasm. It is found in the perinuclear region. Its function is as follows. mRNA-binding protein which interacts with a range of target mRNAs and may promote extracellular matrix production. May function as a component of lumicrine signaling and may play a crucial role in epididymal-mediated sperm maturation and male fertility. The chain is NELL2-interacting cell ontogeny regulator 1 from Gallus gallus (Chicken).